We begin with the raw amino-acid sequence, 244 residues long: Zinc import ATP-binding protein ZnuC 2 (244 aa).

Positions 3-218 (IGCASLTIQL…PEYLALFGID (216 aa)) constitute an ABC transporter domain. Residue 35-42 (GPNGSGKT) participates in ATP binding.

It belongs to the ABC transporter superfamily. Zinc importer (TC 3.A.1.15.5) family. In terms of assembly, the complex is composed of two ATP-binding proteins (ZnuC), two transmembrane proteins (ZnuB) and a solute-binding protein (ZnuA).

The protein resides in the cell inner membrane. The enzyme catalyses Zn(2+)(out) + ATP(in) + H2O(in) = Zn(2+)(in) + ADP(in) + phosphate(in) + H(+)(in). Part of the ABC transporter complex ZnuABC involved in zinc import. Responsible for energy coupling to the transport system. This chain is Zinc import ATP-binding protein ZnuC 2, found in Hahella chejuensis (strain KCTC 2396).